The chain runs to 290 residues: Light-independent protochlorophyllide reductase iron-sulfur ATP-binding protein (290 aa).

ATP is bound by residues 10–15 (GIGKST) and Lys-39. Residue Ser-14 participates in Mg(2+) binding. [4Fe-4S] cluster contacts are provided by Cys-95 and Cys-129. 180–181 (NR) provides a ligand contact to ATP.

Belongs to the NifH/BchL/ChlL family. As to quaternary structure, homodimer. Protochlorophyllide reductase is composed of three subunits; ChlL, ChlN and ChlB. Requires [4Fe-4S] cluster as cofactor.

It localises to the plastid. The protein resides in the chloroplast. It catalyses the reaction chlorophyllide a + oxidized 2[4Fe-4S]-[ferredoxin] + 2 ADP + 2 phosphate = protochlorophyllide a + reduced 2[4Fe-4S]-[ferredoxin] + 2 ATP + 2 H2O. Its pathway is porphyrin-containing compound metabolism; chlorophyll biosynthesis (light-independent). Its function is as follows. Component of the dark-operative protochlorophyllide reductase (DPOR) that uses Mg-ATP and reduced ferredoxin to reduce ring D of protochlorophyllide (Pchlide) to form chlorophyllide a (Chlide). This reaction is light-independent. The L component serves as a unique electron donor to the NB-component of the complex, and binds Mg-ATP. This Cycas taitungensis (Prince sago) protein is Light-independent protochlorophyllide reductase iron-sulfur ATP-binding protein.